The chain runs to 1233 residues: Reverse gyrase 2 (1233 aa).

The segment at 1 to 41 (MNTIPSSNYLSSCPNCGRVISAERLYKGSVCSECLEEDREF) adopts an RG N-terminal-type zinc-finger fold. Residues C13, C16, C31, and C34 each contribute to the Zn(2+) site. Residues Q89 and 106–113 (APPGLGKT) each bind ATP. Positions 93–296 (IIRVLRKESF…ALMGFRPGSS (204 aa)) constitute a Helicase ATP-binding domain. The DEAD box motif lies at 212–215 (DDVD). The segment at 606–1233 (QKVKTVLFIV…DIYYEIKSIR (628 aa)) is topoisomerase I. The 165-residue stretch at 610 to 774 (TVLFIVESPN…NIKRAEFHEV (165 aa)) folds into the Toprim domain. Mg(2+) is bound at residue E616. The RG C-terminal-type; atypical zinc finger occupies 691 to 720 (IKKCINGHQFTDFEQGNQCPKCHTTQIILD). Positions 694, 698, 709, and 712 each coordinate Zn(2+). D743 lines the Mg(2+) pocket. The region spanning 790–1233 (NVNLVKSQIV…DIYYEIKSIR (444 aa)) is the Topo IA-type catalytic domain. Y947 serves as the catalytic O-(5'-phospho-DNA)-tyrosine intermediate.

It in the N-terminal section; belongs to the DEAD box helicase family. DDVD subfamily. This sequence in the C-terminal section; belongs to the type IA topoisomerase family. As to quaternary structure, monomer. The cofactor is Zn(2+). Requires Mg(2+) as cofactor.

It localises to the cytoplasm. The enzyme catalyses ATP + H2O = ADP + phosphate + H(+). Its function is as follows. Modifies the topological state of DNA by introducing positive supercoils in an ATP-dependent process, increasing the linking number in steps of +1. Binds to single-stranded DNA, transiently cleaves and then rejoins the ends, introducing a positive supercoil in the process. The scissile phosphodiester is attacked by the catalytic tyrosine of the enzyme, resulting in the formation of a DNA-(5'-phosphotyrosyl)-enzyme intermediate. Probably involved in rewinding DNA strands in regions of the chromosome that have opened up to allow replication, transcription, DNA repair and/or for DNA protection. This chain is Reverse gyrase 2, found in Sulfurisphaera tokodaii (strain DSM 16993 / JCM 10545 / NBRC 100140 / 7) (Sulfolobus tokodaii).